The primary structure comprises 458 residues: Serine protease Do-like HtrB (458 aa).

Basic and acidic residues predominate over residues 1 to 18 (MDYRRDGQNDQHQTEPSH). Residues 1 to 42 (MDYRRDGQNDQHQTEPSHTEQQNTENQKLIGHSEQELLDAPV) are disordered. Residues 1-71 (MDYRRDGQND…TAVKKEKKRR (71 aa)) are Cytoplasmic-facing. A helical membrane pass occupies residues 72–92 (AAWLSPILGGIIGGGLMLGIA). Residues 93-458 (PYLPSDQNQA…LTKQTESSSS (366 aa)) lie on the Extracellular side of the membrane. The tract at residues 146 to 170 (QTSQNNTFGTGGGSSSESESGTGSG) is disordered. Catalysis depends on charge relay system residues histidine 187, aspartate 217, and serine 298. Substrate contacts are provided by residues 296–298 (GNS) and 352–356 (LGVQM). One can recognise a PDZ domain in the interval 356–440 (MIDMSQVPET…KTTIQVLRKG (85 aa)).

It belongs to the peptidase S1C family.

The protein resides in the cell membrane. It carries out the reaction Acts on substrates that are at least partially unfolded. The cleavage site P1 residue is normally between a pair of hydrophobic residues, such as Val-|-Val.. Degrades abnormal exported proteins and responsible for the propeptide processing of a natural pro-protein and for the maturation of a native protein. It also plays a prominent role in stress (heat shock, ethanol, puromycin and NaCl) resistance during active exponential growth. The sequence is that of Serine protease Do-like HtrB (htrB) from Bacillus subtilis (strain 168).